Here is a 93-residue protein sequence, read N- to C-terminus: Large ribosomal subunit protein bL27 (93 aa).

Residues 1–22 (MAHKKAGGSSRNGRDSEGRRLG) are disordered.

The protein belongs to the bacterial ribosomal protein bL27 family.

This is Large ribosomal subunit protein bL27 from Methylobacterium sp. (strain 4-46).